The following is a 449-amino-acid chain: Glucose-6-phosphate isomerase 1 (449 aa).

Threonine 38 bears the Phosphothreonine mark. Catalysis depends on glutamate 290, which acts as the Proton donor. Residues histidine 311 and lysine 425 contribute to the active site.

It belongs to the GPI family. As to quaternary structure, homodimer.

Its subcellular location is the cytoplasm. The catalysed reaction is alpha-D-glucose 6-phosphate = beta-D-fructose 6-phosphate. It participates in carbohydrate biosynthesis; gluconeogenesis. The protein operates within carbohydrate degradation; glycolysis; D-glyceraldehyde 3-phosphate and glycerone phosphate from D-glucose: step 2/4. In terms of biological role, catalyzes the reversible isomerization of glucose-6-phosphate to fructose-6-phosphate. This is Glucose-6-phosphate isomerase 1 from Geobacillus stearothermophilus (Bacillus stearothermophilus).